The following is a 490-amino-acid chain: Costunolide synthase (490 aa).

The chain crosses the membrane as a helical; Signal-anchor for type II membrane protein span at residues 3–23; sequence PLTIVSLAVASFLLFAFWALS. N167 and N255 each carry an N-linked (GlcNAc...) asparagine glycan. Residue C432 coordinates heme.

The protein belongs to the cytochrome P450 family. Heme serves as cofactor.

The protein resides in the membrane. It carries out the reaction germacra-1(10),4,11(13)-trien-12-oate + reduced [NADPH--hemoprotein reductase] + O2 = (+)-costunolide + oxidized [NADPH--hemoprotein reductase] + 2 H2O. It functions in the pathway secondary metabolite biosynthesis; terpenoid biosynthesis. In terms of biological role, involved in the biosynthesis of germacrene-derived sesquiterpene lactones. Component of the parthenolide biosynthetic pathway; parthenolide and conjugates are promising anti-cancer drugs highly active against colon cancer cells. Hydroxylates germacrene A acid to 6-alpha-hydroxy-germacrne A acid, a precursor of sesquiterpene lactones that spontaneously undergoes a lactonization which yields costunolide. This Lactuca sativa (Garden lettuce) protein is Costunolide synthase.